Reading from the N-terminus, the 603-residue chain is Shugoshin (603 aa).

Residues 11-74 (HIQELQNILD…NVQLRSQVSL (64 aa)) adopt a coiled-coil conformation. Disordered stretches follow at residues 112–164 (ESLP…RSST) and 201–227 (NEIDTNNVNNDNLLSPIPHKKRKSNRR). Composition is skewed to low complexity over residues 146–157 (SVSTGSAHSTSS) and 201–214 (NEIDTNNVNNDNLL). A compositionally biased stretch (basic residues) spans 218–227 (PHKKRKSNRR). A coiled-coil region spans residues 304 to 325 (KQDILDETEKRDTAVNQKKKLE). Residues 331 to 399 (PVEELSSSKN…ESVDFDRPRR (69 aa)) form a disordered region. Over residues 362–376 (KVKHSMKSRKPKKNK) the composition is skewed to basic residues. Residues 431–451 (NIQDLQVKYKKSKKVLEKELK) adopt a coiled-coil conformation. The segment covering 455–467 (KAMKSPKKNEKTF) has biased composition (basic and acidic residues). Disordered regions lie at residues 455–519 (KAMK…HSSF) and 583–603 (HNDTNKSSPKTYRSRSRKNKA). Residues 483–512 (RPSSTHSTSSVDAECSHNNSHSENINSSIN) show a composition bias toward low complexity. Residues 583–593 (HNDTNKSSPKT) show a composition bias toward polar residues. Over residues 594–603 (YRSRSRKNKA) the composition is skewed to basic residues.

The protein belongs to the shugoshin family.

Its subcellular location is the nucleus. The protein resides in the chromosome. It is found in the centromere. Its function is as follows. Plays a central role in chromosome cohesion during cell division by preventing premature dissociation of cohesin complex from centromeres after prophase, when most of cohesin complex dissociates from chromosomes arms. This chain is Shugoshin (SGO1), found in Candida glabrata (strain ATCC 2001 / BCRC 20586 / JCM 3761 / NBRC 0622 / NRRL Y-65 / CBS 138) (Yeast).